The primary structure comprises 170 residues: Peptidyl-prolyl cis-trans isomerase-like 3 (170 aa).

A PPIase cyclophilin-type domain is found at 1–160 (MSVTLHTDLG…QEFRIKSVTI (160 aa)).

It belongs to the cyclophilin-type PPIase family. PPIL3 subfamily.

It carries out the reaction [protein]-peptidylproline (omega=180) = [protein]-peptidylproline (omega=0). Functionally, PPIases accelerate the folding of proteins. It catalyzes the cis-trans isomerization of proline imidic peptide bonds in oligopeptides. This chain is Peptidyl-prolyl cis-trans isomerase-like 3 (cyp4), found in Rhizopus delemar (strain RA 99-880 / ATCC MYA-4621 / FGSC 9543 / NRRL 43880) (Mucormycosis agent).